The following is a 501-amino-acid chain: Lysine--tRNA ligase (501 aa).

Mg(2+)-binding residues include Glu-410 and Glu-417.

This sequence belongs to the class-II aminoacyl-tRNA synthetase family. Homodimer. Mg(2+) is required as a cofactor.

Its subcellular location is the cytoplasm. The catalysed reaction is tRNA(Lys) + L-lysine + ATP = L-lysyl-tRNA(Lys) + AMP + diphosphate. This is Lysine--tRNA ligase from Shewanella pealeana (strain ATCC 700345 / ANG-SQ1).